Reading from the N-terminus, the 2643-residue chain is Ankyrin repeat domain-containing protein 11 (2643 aa).

Disordered regions lie at residues 1 to 90 (MPKG…KEPV) and 128 to 170 (SANS…RGET). 2 stretches are compositionally biased toward basic and acidic residues: residues 21-54 (MVEK…VRER) and 69-90 (EQKD…KEPV). The span at 128 to 155 (SANSPVDTTPKHPSQSTVCQKGTPNSAS) shows a compositional bias: polar residues. Residues 156–170 (KTKDKVNKRNERGET) are compositionally biased toward basic and acidic residues. ANK repeat units follow at residues 167-196 (RGET…DVNV), 200-229 (AGWT…EVNT), 233-262 (DDDT…NPQQ), and 266-292 (KGET…YTSS). Serine 276 bears the Phosphoserine mark. The interval 289–365 (YTSSEESSTE…DRVPPVDDKH (77 aa)) is disordered. Acidic residues predominate over residues 295–305 (SSTESSEEEDA). A compositionally biased stretch (polar residues) spans 309–320 (APSSSVDGNNTD). Composition is skewed to basic and acidic residues over residues 322–335 (EFEK…KNPE) and 356–365 (DRVPPVDDKH). Phosphoserine is present on serine 408. Threonine 410 carries the phosphothreonine modification. Serine 411 is subject to Phosphoserine. 3 disordered regions span residues 423–504 (GEKL…CLKG), 517–651 (SLSA…GQCS), and 727–805 (DANK…DKEK). The span at 438–451 (KARESSSSRQQKEK) shows a compositional bias: basic and acidic residues. Residues 452 to 462 (NKLKKKRKKET) are compositionally biased toward basic residues. A compositionally biased stretch (basic and acidic residues) spans 463–475 (KGKEVRFGKRSDK). A compositionally biased stretch (acidic residues) spans 484 to 494 (ESSESEEDDGD). The span at 517–528 (SLSASSTSSHGS) shows a compositional bias: low complexity. Residues 537-550 (GHTDQHTKHWRTDN) show a composition bias toward basic and acidic residues. Polar residues predominate over residues 557-574 (PAWSEVSSLSDSSRTGLT). Residues 575–588 (SESDCSSEGSSVES) are compositionally biased toward low complexity. Basic residues-rich tracts occupy residues 591–602 (PTRRKQEHRKRG) and 633–646 (VKKH…KHKE). Serine 838 carries the post-translational modification Phosphoserine. Composition is skewed to basic and acidic residues over residues 918–931 (KNSE…EKHK) and 938–962 (SEKD…IRSE). Disordered stretches follow at residues 918–962 (KNSE…IRSE), 977–1037 (SFKD…STLD), and 1051–1074 (EKKD…FDQL). Serine 1070 is subject to Phosphoserine. Threonine 1111 carries the phosphothreonine modification. A Phosphoserine modification is found at serine 1114. 2 disordered regions span residues 1114-1388 (SEDE…KDAS) and 1420-1711 (LFSS…TPSC). 8 stretches are compositionally biased toward basic and acidic residues: residues 1133-1297 (DTQR…DKIS), 1326-1343 (AEDK…LREK), 1355-1388 (KSHE…KDAS), 1420-1444 (LFSS…KELK), 1464-1535 (RERW…KGDS), 1546-1564 (VPSR…KLLG), 1577-1587 (LSQKDLEIEER), and 1595-1640 (MKQM…KVKE). Position 1676 is a phosphoserine (serine 1676). A compositionally biased stretch (polar residues) spans 1678–1695 (RTEQSRPTGVPTPTSVVS). Phosphoserine occurs at positions 1777 and 1832. A phosphotyrosine mark is found at tyrosine 1835 and tyrosine 1836. Serine 1837 and serine 1844 each carry phosphoserine. Disordered regions lie at residues 1863 to 1900 (PPDS…GLPL), 1981 to 2027 (SPKH…EVKD), and 2111 to 2386 (HEAF…STQQ). Phosphoserine occurs at positions 1981 and 2139. Composition is skewed to pro residues over residues 2150–2160 (PVPPAESPPGP) and 2175–2184 (EEPPAPPPQE). Over residues 2273 to 2284 (SAEASCVVAAAE) the composition is skewed to low complexity. A compositionally biased stretch (basic and acidic residues) spans 2297–2315 (PEPKPTSEVPKAPKVEEVP). Positions 2349 to 2643 (AKGRASEEED…VNDDFVLLPA (295 aa)) are important for protein degradation. The span at 2371-2386 (RSSQQLQQQLNTSTQQ) shows a compositional bias: low complexity.

In terms of assembly, interacts with the PAS region of the p160 coactivators. In terms of processing, subject to proteasomal degradation which is probably essential to regulate its activity.

Its subcellular location is the nucleus. Its function is as follows. Chromatin regulator which modulates histone acetylation and gene expression in neural precursor cells. May recruit histone deacetylases (HDACs) to the p160 coactivators/nuclear receptor complex to inhibit ligand-dependent transactivation. Has a role in proliferation and development of cortical neural precursors. May also regulate bone homeostasis. The polypeptide is Ankyrin repeat domain-containing protein 11 (Mus musculus (Mouse)).